The primary structure comprises 446 residues: Methionine aminopeptidase 2-3 (446 aa).

The tract at residues 14-116 is disordered; that stretch reads ITDAGANGAD…ENRYRTTSEE (103 aa). Basic residues predominate over residues 61–76; sequence AKKKKNKKRKPKKKQP. The span at 86 to 96 shows a compositional bias: polar residues; the sequence is PLSQLFPNNSY. Over residues 98–116 the composition is skewed to basic and acidic residues; it reads KGEEVEYKDENRYRTTSEE. Residue His199 participates in substrate binding. Residues Asp219, Asp230, and His299 each coordinate a divalent metal cation. His307 is a binding site for substrate. Residues Glu332 and Glu427 each contribute to the a divalent metal cation site.

Belongs to the peptidase M24A family. Methionine aminopeptidase eukaryotic type 2 subfamily. Co(2+) serves as cofactor. Zn(2+) is required as a cofactor. Requires Mn(2+) as cofactor. The cofactor is Fe(2+).

It is found in the cytoplasm. The enzyme catalyses Release of N-terminal amino acids, preferentially methionine, from peptides and arylamides.. Cotranslationally removes the N-terminal methionine from nascent proteins. The N-terminal methionine is often cleaved when the second residue in the primary sequence is small and uncharged (Met-Ala-, Cys, Gly, Pro, Ser, Thr, or Val). This chain is Methionine aminopeptidase 2-3, found in Aspergillus fumigatus (strain CBS 144.89 / FGSC A1163 / CEA10) (Neosartorya fumigata).